The following is a 327-amino-acid chain: Prenyl transferase janC (327 aa).

A helical membrane pass occupies residues 3 to 23; the sequence is FPGAGPILGAIAVSSCLYFLF. The isopentenyl diphosphate site is built by lysine 63 and histidine 96. Residues aspartate 103 and aspartate 107 each contribute to the Mg(2+) site. Positions 112 and 196 each coordinate dimethylallyl diphosphate. Asparagine 211 is a glycosylation site (N-linked (GlcNAc...) asparagine).

The protein belongs to the FPP/GGPP synthase family.

It is found in the membrane. The protein operates within secondary metabolite biosynthesis. Prenyl transferase; part of the gene cluster that mediates the biosynthesis of the indole diterpenes janthitremanes such as shearinine K or shearinine A. The geranylgeranyl diphosphate (GGPP) synthase janG catalyzes the first step in janthitremane biosynthesis via conversion of farnesyl pyrophosphate and isopentyl pyrophosphate into geranylgeranyl pyrophosphate (GGPP). Condensation of indole-3-glycerol phosphate with GGPP by the prenyl transferase janC then forms 3-geranylgeranylindole (3-GGI). Epoxidation by the FAD-dependent monooxygenase janM leads to a epoxidized-GGI that is substrate of the terpene cyclase janB for cyclization to yield paspaline. Paspaline is subsequently converted to 13-desoxypaspaline by the cytochrome P450 monooxygenase janP, via beta-PC-M6 in a series of alpha-face oxidations. The cytochrome P450 monooxygenase janQ is proposed to carry out sequential beta-face oxidation steps at C-7 and C-13 of 13-desoxypaspaline to form paspalicine and paspalinine respectively. The indole diterpene prenyltransferase janD may then convert paspalinine into shearinine K which is substrate of janO and/or additional enzymes for oxidation and cyclization to generate shearinine A. The protein is Prenyl transferase janC of Penicillium janthinellum (Penicillium vitale).